Reading from the N-terminus, the 100-residue chain is Histone-like protein p6 (100 aa).

The DNA-binding element occupies methionine 1 to methionine 19.

The protein belongs to the phi29likevirus histone-like protein p6 family. Homodimer. Homomultimer. Binds to double-stranded DNA giving rise to multimeric nucleoprotein complexes. Binding specificity for the viral DNA is based on supercoiling, the viral genome having a negative superhelicity lower than that of plasmid DNA. Interacts with the DNA replication protein p17; this interaction optimizes the binding of protein p6 at the viral DNA ends, thus favoring the initiation of replication.

In terms of biological role, histone-like nucleoprotein that binds to the viral dsDNA and responsible for wrapping and compacting the viral DNA about 4-fold. Forms a nucleoprotein complex in which the DNA adopts a right-handed toroidal conformation winding around a protein core. Binds ito most, if not all, the viral genome, although with different affinity, the highest one corresponding to the genome ends. The formation of the nucleoprotein complex at the genome ends, activates the initiation of viral DNA replication. The binding of p6 would recruit the complex formed by the TP and the DNA polymerase to the origin. Protein p6 also represses early transcription from promoter C2, and, together with protein p4, represses transcription from promoters A2b and A2c and activates late transcription from promoter A3. Protein p6 is therefore involved in the early to late transcription switch. The formation of the nucleoprotein complex at the right end of the phage genome where the early promoter C2 is located affects local topology, which may contribute to the promoter repression. The protein is Histone-like protein p6 (6) of Bacillus phage B103 (Bacteriophage B103).